The primary structure comprises 472 residues: Relaxin-3 receptor 1 (472 aa).

At 1 to 81 (MQVASATPAA…ESTDTEARVR (81 aa)) the chain is on the extracellular side. N-linked (GlcNAc...) asparagine glycans are attached at residues N36 and N40. The helical transmembrane segment at 82–102 (ILISAVYWVVCALGLAGNLLV) threads the bilayer. Residues 103-119 (LYLMKSKQGWRKSSINL) are Cytoplasmic-facing. The helical transmembrane segment at 120–140 (FVTNLALTDFQFVLTLPFWAV) threads the bilayer. Topologically, residues 141 to 156 (ENALDFKWPFGKAMCK) are extracellular. C155 and C247 are joined by a disulfide. A helical membrane pass occupies residues 157 to 177 (IVSMVTSMNMYASVFFLTAMS). The Cytoplasmic segment spans residues 178–215 (VARYHSVASALKSHRTRGRGRGDCCGQSLRESCCFSAK). A helical transmembrane segment spans residues 216–236 (VLCGLIWASAALASLPNAIFS). Residues 237 to 270 (TTIRVLGEELCLMHFPDKLLGWDRQFWLGLYHLQ) are Extracellular-facing. The helical transmembrane segment at 271–291 (KVLLGFLLPLSIISLCYLLLV) threads the bilayer. The Cytoplasmic segment spans residues 292 to 298 (RFISDRR). A helical transmembrane segment spans residues 299-319 (VVGTTDAVGAAAAPGGGLSTA). Residues 320–332 (SARRRSKVTKSVT) lie on the Extracellular side of the membrane. Residues 333 to 353 (IVVLSFFLCWLPNQALTTWSI) traverse the membrane as a helical segment. Topologically, residues 354–472 (LIKFNAVPFS…YDLLPSSSAY (119 aa)) are cytoplasmic.

The protein belongs to the G-protein coupled receptor 1 family.

The protein localises to the cell membrane. In terms of biological role, receptor for RNL3/relaxin-3. Binding of the ligand inhibit cAMP accumulation. The sequence is that of Relaxin-3 receptor 1 (Rxfp3) from Mus musculus (Mouse).